The following is a 637-amino-acid chain: 3D-(3,5/4)-trihydroxycyclohexane-1,2-dione hydrolase (637 aa).

Glu66 is a thiamine diphosphate binding site. Positions 442–522 (SLPGDLQRLW…INVLLFDNSG (81 aa)) are thiamine pyrophosphate binding. 2 residues coordinate Mg(2+): Asp493 and Asn520.

The protein belongs to the TPP enzyme family. It depends on Mg(2+) as a cofactor. Thiamine diphosphate serves as cofactor.

It carries out the reaction 3D-3,5/4-trihydroxycyclohexane-1,2-dione + H2O = 5-deoxy-D-glucuronate + H(+). It functions in the pathway polyol metabolism; myo-inositol degradation into acetyl-CoA; acetyl-CoA from myo-inositol: step 3/7. In terms of biological role, involved in the cleavage of the C1-C2 bond of 3D-(3,5/4)-trihydroxycyclohexane-1,2-dione (THcHDO) to yield 5-deoxy-glucuronate (5DG). The chain is 3D-(3,5/4)-trihydroxycyclohexane-1,2-dione hydrolase from Bacillus licheniformis (strain ATCC 14580 / DSM 13 / JCM 2505 / CCUG 7422 / NBRC 12200 / NCIMB 9375 / NCTC 10341 / NRRL NRS-1264 / Gibson 46).